The sequence spans 423 residues: Zinc-type alcohol dehydrogenase-like protein C1198.01 (423 aa).

Positions 14–36 are disordered; the sequence is KQLGHREVSEGSTQPKPDPSGAT. The Zn(2+) site is built by C74, H97, C127, C130, C133, and C141.

It belongs to the zinc-containing alcohol dehydrogenase family. Class-III subfamily. It depends on Zn(2+) as a cofactor.

It is found in the golgi apparatus. The chain is Zinc-type alcohol dehydrogenase-like protein C1198.01 from Schizosaccharomyces pombe (strain 972 / ATCC 24843) (Fission yeast).